The primary structure comprises 392 residues: INCREASED PETAL GROWTH ANISOTROPY 1-like protein 1 (392 aa).

Positions 11–52 form a coiled coil; that stretch reads LLRLVKELQAYLVRNDKLEKENHELRQEVARLRAQVSNLKSH. Composition is skewed to polar residues over residues 65-76 and 100-109; these read QSSYDGSNTDGS and PTIQGQSTAT. Residues 65–128 form a disordered region; sequence QSSYDGSNTD…SKRTLGKRSV (64 aa). Positions 269–299 form a coiled coil; sequence KDSLTQALQRIQSLQDRLEESVNNTEKMRDS.

Belongs to the IPGA1 family.

Its subcellular location is the cytoplasm. The protein localises to the cytoskeleton. Its function is as follows. Microtubule-associated protein probably involved in the regulation of microtubule organization. In Arabidopsis thaliana (Mouse-ear cress), this protein is INCREASED PETAL GROWTH ANISOTROPY 1-like protein 1.